Reading from the N-terminus, the 207-residue chain is Uridine kinase (207 aa).

13-20 (GASGSGKT) lines the ATP pocket.

It belongs to the uridine kinase family.

It localises to the cytoplasm. The catalysed reaction is uridine + ATP = UMP + ADP + H(+). It catalyses the reaction cytidine + ATP = CMP + ADP + H(+). It functions in the pathway pyrimidine metabolism; CTP biosynthesis via salvage pathway; CTP from cytidine: step 1/3. Its pathway is pyrimidine metabolism; UMP biosynthesis via salvage pathway; UMP from uridine: step 1/1. The chain is Uridine kinase from Ureaplasma urealyticum serovar 10 (strain ATCC 33699 / Western).